The primary structure comprises 414 residues: Gamma-glutamyl phosphate reductase (414 aa).

Belongs to the gamma-glutamyl phosphate reductase family.

It is found in the cytoplasm. The enzyme catalyses L-glutamate 5-semialdehyde + phosphate + NADP(+) = L-glutamyl 5-phosphate + NADPH + H(+). Its pathway is amino-acid biosynthesis; L-proline biosynthesis; L-glutamate 5-semialdehyde from L-glutamate: step 2/2. Functionally, catalyzes the NADPH-dependent reduction of L-glutamate 5-phosphate into L-glutamate 5-semialdehyde and phosphate. The product spontaneously undergoes cyclization to form 1-pyrroline-5-carboxylate. The polypeptide is Gamma-glutamyl phosphate reductase (Clostridium botulinum (strain Alaska E43 / Type E3)).